We begin with the raw amino-acid sequence, 249 residues long: Acidic leucine-rich nuclear phosphoprotein 32 family member A (249 aa).

Phosphothreonine is present on T15. S17 is subject to Phosphoserine. 4 LRR repeats span residues 18–38 (DVKE…EGLT), 43–64 (ELEF…PKLN), 65–87 (KLKK…AEKC), and 89–110 (NLTH…EPLK). The LRRCT domain maps to 123–161 (CEVTNLNDYRENVFKLLPQLTYLDGYDRDDKEAPDSDAE). Residues 147-156 (GYDRDDKEAP) show a composition bias toward basic and acidic residues. The segment at 147 to 249 (GYDRDDKEAP…EPEDEGEDDD (103 aa)) is disordered. A necessary for tumor-suppressive function region spans residues 150–174 (RDDKEAPDSDAEGYVEGLDDEEEDE). Over residues 157 to 230 (DSDAEGYVEG…DEEDEEELGE (74 aa)) the composition is skewed to acidic residues. A phosphoserine; by CK2 mark is found at S158 and S204. Residues 165–249 (EGLDDEEEDE…EPEDEGEDDD (85 aa)) are interaction with E4F1.

The protein belongs to the ANP32 family. As to quaternary structure, component of the SET complex, composed of at least ANP32A, APEX1, HMGB2, NME1, SET and TREX1. Directly interacts with SET. Interacts with ATXN1/SCA1. Interacts with MAP1B. Interacts with ELAVL1. Part of the INHAT (inhibitor of histone acetyltransferases) complex. Interacts with E4F1. (Microbial infection) Interacts (via C-terminus) with influenza virus A protein PB2; this interaction promotes viral replication. In terms of assembly, (Microbial infection) Interacts (via C-terminus) with influenza virus B protein PB2; this interaction promotes viral replication. As to quaternary structure, (Microbial infection) Interacts (via C-terminus) with influenza virus C protein PB2; this interaction promotes viral replication by bridging viral replicase dimers together. In terms of processing, phosphorylated on serine residues, at least in part by casein kinase 2/CK2. Post-translationally, the N-terminus is blocked. Some glutamate residues are glycylated by TTLL8. This modification occurs exclusively on glutamate residues and results in a glycine chain on the gamma-carboxyl group. In terms of tissue distribution, expressed in all tissues tested. Highly expressed in kidney and skeletal muscle, moderate levels of expression in brain, placenta and pancreas, and weakly expressed in lung. Found in all regions of the brain examined (amygdala, caudate nucleus, corpus callosum, hippocampus and thalamus), with highest levels in amygdala.

It is found in the nucleus. Its subcellular location is the cytoplasm. It localises to the endoplasmic reticulum. Multifunctional protein that is involved in the regulation of many processes including tumor suppression, apoptosis, cell cycle progression or transcription. Promotes apoptosis by favouring the activation of caspase-9/CASP9 and allowing apoptosome formation. In addition, plays a role in the modulation of histone acetylation and transcription as part of the INHAT (inhibitor of histone acetyltransferases) complex. Inhibits the histone-acetyltranferase activity of EP300/CREBBP (CREB-binding protein) and EP300/CREBBP-associated factor by histone masking. Preferentially binds to unmodified histone H3 and sterically inhibiting its acetylation and phosphorylation leading to cell growth inhibition. Participates in other biochemical processes such as regulation of mRNA nuclear-to-cytoplasmic translocation and stability by its association with ELAVL1 (Hu-antigen R). Plays a role in E4F1-mediated transcriptional repression as well as inhibition of protein phosphatase 2A. Its function is as follows. (Microbial infection) Plays an essential role in influenza A, B and C viral genome replication. Mechanistically, mediates the assembly of the viral replicase asymmetric dimers composed of PB1, PB2 and PA via its N-terminal region. Also plays an essential role in foamy virus mRNA export from the nucleus. This chain is Acidic leucine-rich nuclear phosphoprotein 32 family member A (ANP32A), found in Homo sapiens (Human).